The primary structure comprises 151 residues: Putative superoxide dismutase [Cu-Zn] (151 aa).

Positions 43, 45, and 60 each coordinate Cu cation. C54 and C144 are oxidised to a cystine. 4 residues coordinate Zn(2+): H60, H68, H77, and D80. Cu cation is bound at residue H118.

The protein belongs to the Cu-Zn superoxide dismutase family. The cofactor is Cu cation. Zn(2+) is required as a cofactor.

It catalyses the reaction 2 superoxide + 2 H(+) = H2O2 + O2. Functionally, nonessential for normal virus replication. Could be either non-functional or with a low activity. This Lepidoptera (butterflies and moths) protein is Putative superoxide dismutase [Cu-Zn] (SOD).